The following is a 179-amino-acid chain: Ribosome-recycling factor (179 aa).

Belongs to the RRF family.

The protein localises to the cytoplasm. Functionally, responsible for the release of ribosomes from messenger RNA at the termination of protein biosynthesis. May increase the efficiency of translation by recycling ribosomes from one round of translation to another. This Chlamydia trachomatis serovar L2b (strain UCH-1/proctitis) protein is Ribosome-recycling factor.